We begin with the raw amino-acid sequence, 573 residues long: 2-succinyl-5-enolpyruvyl-6-hydroxy-3-cyclohexene-1-carboxylate synthase (573 aa).

The protein belongs to the TPP enzyme family. MenD subfamily. As to quaternary structure, homodimer. Mg(2+) is required as a cofactor. Mn(2+) serves as cofactor. The cofactor is thiamine diphosphate.

The enzyme catalyses isochorismate + 2-oxoglutarate + H(+) = 5-enolpyruvoyl-6-hydroxy-2-succinyl-cyclohex-3-ene-1-carboxylate + CO2. Its pathway is quinol/quinone metabolism; 1,4-dihydroxy-2-naphthoate biosynthesis; 1,4-dihydroxy-2-naphthoate from chorismate: step 2/7. The protein operates within quinol/quinone metabolism; menaquinone biosynthesis. Its function is as follows. Catalyzes the thiamine diphosphate-dependent decarboxylation of 2-oxoglutarate and the subsequent addition of the resulting succinic semialdehyde-thiamine pyrophosphate anion to isochorismate to yield 2-succinyl-5-enolpyruvyl-6-hydroxy-3-cyclohexene-1-carboxylate (SEPHCHC). The polypeptide is 2-succinyl-5-enolpyruvyl-6-hydroxy-3-cyclohexene-1-carboxylate synthase (Shewanella baltica (strain OS185)).